A 292-amino-acid chain; its full sequence is Geranyl diphosphate 2-C-methyltransferase (292 aa).

The protein belongs to the geranyl diphosphate 2-C-methyltransferase family. The cofactor is Mg(2+).

The catalysed reaction is (2E)-geranyl diphosphate + S-adenosyl-L-methionine = (E)-2-methylgeranyl diphosphate + S-adenosyl-L-homocysteine + H(+). Functionally, catalyzes the SAM-dependent methylation of geranyl diphosphate (GPP) to yield (E)-2-methylgeranyl diphosphate (2-MeGPP). In Streptomyces coelicolor (strain ATCC BAA-471 / A3(2) / M145), this protein is Geranyl diphosphate 2-C-methyltransferase.